The chain runs to 485 residues: Zinc finger protein 639 (485 aa).

Over residues 1-14 (MNEYPKKRKRKTLH) the composition is skewed to basic residues. Residues 1 to 20 (MNEYPKKRKRKTLHPSRYSD) form a disordered region. Ser60 carries the post-translational modification Phosphoserine. A Glycyl lysine isopeptide (Lys-Gly) (interchain with G-Cter in SUMO2) cross-link involves residue Lys76. Ser88 is subject to Phosphoserine. Glycyl lysine isopeptide (Lys-Gly) (interchain with G-Cter in SUMO2) cross-links involve residues Lys177, Lys181, and Lys226. 8 consecutive C2H2-type zinc fingers follow at residues 204–227 (YKCELCEFNSKYFSDLKQHMILKH), 233–255 (NVCRVCKESFSTNMLLIEHAKLH), 260–283 (YICKYCDYKTVIFENLSQHIADTH), 289–311 (YWCEQCDVQFSSSSELYLHFQEH), 374–397 (FVCQVCGFRSRLHTNVNRHVAIEH), 403–425 (HVCDDCGKGFSSMLEYCKHLNSH), 431–454 (YLCQYCEYSTGQIEDLKIHLDFKH), and 460–482 (HKCSDCLMRFGNERELISHLPVH). The segment at 371-455 (KNFFVCQVCG…LKIHLDFKHS (85 aa)) is interaction with CTNNA2.

This sequence belongs to the krueppel C2H2-type zinc-finger protein family. As to quaternary structure, interacts with CTNNA2.

It is found in the nucleus. In terms of biological role, binds DNA and may function as a transcriptional repressor. This Bos taurus (Bovine) protein is Zinc finger protein 639 (ZNF639).